The primary structure comprises 510 residues: Glycogen synthase (510 aa).

ADP-alpha-D-glucose is bound at residue Lys18.

The protein belongs to the glycosyltransferase 1 family. Bacterial/plant glycogen synthase subfamily.

The catalysed reaction is [(1-&gt;4)-alpha-D-glucosyl](n) + ADP-alpha-D-glucose = [(1-&gt;4)-alpha-D-glucosyl](n+1) + ADP + H(+). It functions in the pathway glycan biosynthesis; glycogen biosynthesis. Functionally, synthesizes alpha-1,4-glucan chains using ADP-glucose. In Bordetella parapertussis (strain 12822 / ATCC BAA-587 / NCTC 13253), this protein is Glycogen synthase.